The primary structure comprises 474 residues: Synaptotagmin-17 (474 aa).

Positions 54-112 (PAQTPPWLVSNRSEDKEGDSDNTTSEPPATPQDTSPDRRRSSSDTSRSTYSLTRRISSL) are disordered. The segment covering 96–112 (SDTSRSTYSLTRRISSL) has biased composition (low complexity). 2 consecutive C2 domains span residues 184–310 (QLGM…HWWK) and 321–455 (ELGE…EQWH).

The protein belongs to the synaptotagmin family.

Its subcellular location is the membrane. May play a role in dendrite formation by melanocytes. The sequence is that of Synaptotagmin-17 (syt17) from Xenopus tropicalis (Western clawed frog).